Consider the following 163-residue polypeptide: Retinoic acid receptor responder protein 2 (163 aa).

The first 20 residues, 1 to 20 (MKYLLISLALWLGMVGIHGT), serve as a signal peptide directing secretion. 3 disulfides stabilise this stretch: C79-C89, C100-C119, and C103-C135. Positions 158-163 (RALKHK) are excised as a propeptide.

Post-translationally, secreted in an inactive precursor form, prochemerin, which is proteolytically processed by a variety of extracellular proteases to generate forms with differing levels of bioactivity. For example, the removal of six amino acids results in chemerin-157, which exhibits the highest activity, while removal of seven amino acids results in chemerin-156 which has slightly less activity. Some proteases are able to cleave at more than one site and chemerin forms may be sequentially processed by different enzymes to modulate activity levels. The coordinated expression and activity of chemerin-modifying enzymes is essential for regulating its bioactivation, inactivation and, consequently, biological function. Cathepsin G cleaves seven C-terminal amino acids from prochemerin (chemerin-156), elastase is able to cleave six (chemerin-157), eight (chemerin-155) or eleven (chemerin-152), plasmin cleaves five amino acids (chemerin-158), and tryptase cleaves five (chemerin-158) or eight (chemerin-155). Multiple cleavages might be required to fully activate chemerin, with an initial tryptase cleavage resulting in chemerin with low activity (chemerin-158), and a second cleavage by carboxypeptidase N or B producing highly active chemerin (chemerin-157).

The protein localises to the secreted. Functionally, adipocyte-secreted protein (adipokine) that regulates adipogenesis, metabolism and inflammation through activation of the chemokine-like receptor 1 (CMKLR1). Also acts as a ligand for CMKLR2. Can also bind to C-C chemokine receptor-like 2 (CCRL2), but with a lower affinity than it does to CMKLR1 or CMKLR2. Positively regulates adipocyte differentiation, modulates the expression of adipocyte genes involved in lipid and glucose metabolism and might play a role in angiogenesis, a process essential for the expansion of white adipose tissue. Also acts as a pro-inflammatory adipokine, causing an increase in secretion of pro-inflammatory and prodiabetic adipokines, which further impair adipose tissue metabolic function and have negative systemic effects including impaired insulin sensitivity, altered glucose and lipid metabolism, and a decrease in vascular function in other tissues. Can have both pro- and anti-inflammatory properties depending on the modality of enzymatic cleavage by different classes of proteases. Acts as a chemotactic factor for leukocyte populations expressing CMKLR1, particularly immature plasmacytoid dendritic cells, but also immature myeloid DCs, macrophages and natural killer cells. Exerts an anti-inflammatory role by preventing TNF/TNFA-induced VCAM1 expression and monocytes adhesion in vascular endothelial cells. The effect is mediated via inhibiting activation of NF-kappa-B and CRK/p38 through stimulation of AKT1/NOS3 signaling and nitric oxide production. Its dual role in inflammation and metabolism might provide a link Exhibits an antimicrobial function in the skin. This Cricetulus griseus (Chinese hamster) protein is Retinoic acid receptor responder protein 2 (RARRES2).